We begin with the raw amino-acid sequence, 363 residues long: 3-isopropylmalate dehydrogenase (363 aa).

79-92 (GPKWEHLPPNDQPE) provides a ligand contact to NAD(+). 4 residues coordinate substrate: Arg100, Arg110, Arg139, and Asp228. Mg(2+) is bound by residues Asp228, Asp252, and Asp256. An NAD(+)-binding site is contributed by 286–298 (GSAPDIAGKNIAN).

It belongs to the isocitrate and isopropylmalate dehydrogenases family. LeuB type 1 subfamily. As to quaternary structure, homodimer. It depends on Mg(2+) as a cofactor. The cofactor is Mn(2+).

The protein localises to the cytoplasm. It carries out the reaction (2R,3S)-3-isopropylmalate + NAD(+) = 4-methyl-2-oxopentanoate + CO2 + NADH. The protein operates within amino-acid biosynthesis; L-leucine biosynthesis; L-leucine from 3-methyl-2-oxobutanoate: step 3/4. Catalyzes the oxidation of 3-carboxy-2-hydroxy-4-methylpentanoate (3-isopropylmalate) to 3-carboxy-4-methyl-2-oxopentanoate. The product decarboxylates to 4-methyl-2 oxopentanoate. This is 3-isopropylmalate dehydrogenase from Vibrio vulnificus (strain YJ016).